A 359-amino-acid chain; its full sequence is 4-hydroxy-3-methylbut-2-en-1-yl diphosphate synthase (flavodoxin) (359 aa).

Residues cysteine 264, cysteine 267, cysteine 299, and glutamate 306 each coordinate [4Fe-4S] cluster.

This sequence belongs to the IspG family. [4Fe-4S] cluster serves as cofactor.

The enzyme catalyses (2E)-4-hydroxy-3-methylbut-2-enyl diphosphate + oxidized [flavodoxin] + H2O + 2 H(+) = 2-C-methyl-D-erythritol 2,4-cyclic diphosphate + reduced [flavodoxin]. Its pathway is isoprenoid biosynthesis; isopentenyl diphosphate biosynthesis via DXP pathway; isopentenyl diphosphate from 1-deoxy-D-xylulose 5-phosphate: step 5/6. In terms of biological role, converts 2C-methyl-D-erythritol 2,4-cyclodiphosphate (ME-2,4cPP) into 1-hydroxy-2-methyl-2-(E)-butenyl 4-diphosphate. The chain is 4-hydroxy-3-methylbut-2-en-1-yl diphosphate synthase (flavodoxin) from Mycoplasmoides gallisepticum (strain R(low / passage 15 / clone 2)) (Mycoplasma gallisepticum).